The following is a 543-amino-acid chain: T-complex protein 1 subunit eta (543 aa).

At M1 the chain carries N-acetylmethionine. G41 is a binding site for ADP. Residue G41 participates in ATP binding. Position 67 is an N6-acetyllysine (K67). Mg(2+) is bound at residue D92. G93, T94, T95, S96, S164, and S165 together coordinate ADP. Position 93 (G93) interacts with ATP. Position 96 (S96) interacts with ATP. An N6-acetyllysine mark is found at K250 and K320. Positions 398 and 409 each coordinate ATP. An ADP-binding site is contributed by G409. K430 is covalently cross-linked (Glycyl lysine isopeptide (Lys-Gly) (interchain with G-Cter in SUMO2)). ADP-binding residues include E494 and R499. R499 contributes to the ATP binding site. The disordered stretch occupies residues 524-543; that stretch reads RSTVDAPTAAGRGRGRGRPH. R535 carries the post-translational modification Omega-N-methylarginine.

Belongs to the TCP-1 chaperonin family. Component of the chaperonin-containing T-complex (TRiC), a hexadecamer composed of two identical back-to-back stacked rings enclosing a protein folding chamber. Each ring is made up of eight different subunits: TCP1/CCT1, CCT2, CCT3, CCT4, CCT5, CCT6A/CCT6, CCT7, CCT8. Interacts with PACRG. Interacts with DLEC1.

It is found in the cytoplasm. The enzyme catalyses ATP + H2O = ADP + phosphate + H(+). Component of the chaperonin-containing T-complex (TRiC), a molecular chaperone complex that assists the folding of actin, tubulin and other proteins upon ATP hydrolysis. The TRiC complex mediates the folding of WRAP53/TCAB1, thereby regulating telomere maintenance. The chain is T-complex protein 1 subunit eta (CCT7) from Homo sapiens (Human).